The sequence spans 71 residues: uncharacterized protein (71 aa).

One can recognise an HTH cro/C1-type domain in the interval 5–59 (IKEFRAKFNMTQEELAKRVGVRRETIVFLEKGKYNPSLKLAYKIARVFNAKIEDI). Positions 16 to 35 (QEELAKRVGVRRETIVFLEK) form a DNA-binding region, H-T-H motif.

This is an uncharacterized protein from Archaeoglobus fulgidus (strain ATCC 49558 / DSM 4304 / JCM 9628 / NBRC 100126 / VC-16).